We begin with the raw amino-acid sequence, 642 residues long: Glutamyl-tRNA(Gln) amidotransferase subunit E (642 aa).

The protein belongs to the GatB/GatE family. GatE subfamily. Heterodimer of GatD and GatE.

The catalysed reaction is L-glutamyl-tRNA(Gln) + L-glutamine + ATP + H2O = L-glutaminyl-tRNA(Gln) + L-glutamate + ADP + phosphate + H(+). Its function is as follows. Allows the formation of correctly charged Gln-tRNA(Gln) through the transamidation of misacylated Glu-tRNA(Gln) in organisms which lack glutaminyl-tRNA synthetase. The reaction takes place in the presence of glutamine and ATP through an activated gamma-phospho-Glu-tRNA(Gln). The GatDE system is specific for glutamate and does not act on aspartate. In Aeropyrum pernix (strain ATCC 700893 / DSM 11879 / JCM 9820 / NBRC 100138 / K1), this protein is Glutamyl-tRNA(Gln) amidotransferase subunit E.